We begin with the raw amino-acid sequence, 124 residues long: Cytochrome c oxidase subunit 4 isoform 1, mitochondrial (124 aa).

Position 4 is an N6-acetyllysine; alternate (lysine 4). Lysine 4 is modified (N6-succinyllysine; alternate). Phosphoserine is present on residues serine 31 and serine 33. Position 35 is an N6-acetyllysine; alternate (lysine 35). Lysine 35 is subject to N6-succinyllysine; alternate. Position 42 is an N6-acetyllysine (lysine 42).

It belongs to the cytochrome c oxidase IV family. In terms of assembly, component of the cytochrome c oxidase (complex IV, CIV), a multisubunit enzyme composed of 14 subunits. The complex is composed of a catalytic core of 3 subunits MT-CO1, MT-CO2 and MT-CO3, encoded in the mitochondrial DNA, and 11 supernumerary subunits COX4I, COX5A, COX5B, COX6A, COX6B, COX6C, COX7A, COX7B, COX7C, COX8 and NDUFA4, which are encoded in the nuclear genome. The complex exists as a monomer or a dimer and forms supercomplexes (SCs) in the inner mitochondrial membrane with NADH-ubiquinone oxidoreductase (complex I, CI) and ubiquinol-cytochrome c oxidoreductase (cytochrome b-c1 complex, complex III, CIII), resulting in different assemblies (supercomplex SCI(1)III(2)IV(1) and megacomplex MCI(2)III(2)IV(2)). Interacts with PHB2; the interaction decreases in absence of SPHK2. Interacts with AFG1L. Interacts with ABCB7; this interaction allows the regulation of cellular iron homeostasis and cellular reactive oxygen species (ROS) levels in cardiomyocytes. Interacts with FLVCR2; this interaction occurs in the absence of heme and is disrupted upon heme binding. Interacts with IRGC.

It is found in the mitochondrion inner membrane. It functions in the pathway energy metabolism; oxidative phosphorylation. Its function is as follows. Component of the cytochrome c oxidase, the last enzyme in the mitochondrial electron transport chain which drives oxidative phosphorylation. The respiratory chain contains 3 multisubunit complexes succinate dehydrogenase (complex II, CII), ubiquinol-cytochrome c oxidoreductase (cytochrome b-c1 complex, complex III, CIII) and cytochrome c oxidase (complex IV, CIV), that cooperate to transfer electrons derived from NADH and succinate to molecular oxygen, creating an electrochemical gradient over the inner membrane that drives transmembrane transport and the ATP synthase. Cytochrome c oxidase is the component of the respiratory chain that catalyzes the reduction of oxygen to water. Electrons originating from reduced cytochrome c in the intermembrane space (IMS) are transferred via the dinuclear copper A center (CU(A)) of subunit 2 and heme A of subunit 1 to the active site in subunit 1, a binuclear center (BNC) formed by heme A3 and copper B (CU(B)). The BNC reduces molecular oxygen to 2 water molecules using 4 electrons from cytochrome c in the IMS and 4 protons from the mitochondrial matrix. This is Cytochrome c oxidase subunit 4 isoform 1, mitochondrial (COX4I1) from Saimiri sciureus (Common squirrel monkey).